Consider the following 390-residue polypeptide: Queuine tRNA-ribosyltransferase (390 aa).

Asp-92 (proton acceptor) is an active-site residue. Residues 92–96, Asp-146, Gln-195, and Gly-222 contribute to the substrate site; that span reads DSGGF. An RNA binding region spans residues 253-259; the sequence is GVGTPED. The Nucleophile role is filled by Asp-272. An RNA binding; important for wobble base 34 recognition region spans residues 277 to 281; sequence TRNAR. Zn(2+) is bound by residues Cys-310, Cys-312, Cys-315, and His-354.

Belongs to the queuine tRNA-ribosyltransferase family. Homodimer. Within each dimer, one monomer is responsible for RNA recognition and catalysis, while the other monomer binds to the replacement base PreQ1. Zn(2+) serves as cofactor.

It carries out the reaction 7-aminomethyl-7-carbaguanine + guanosine(34) in tRNA = 7-aminomethyl-7-carbaguanosine(34) in tRNA + guanine. Its pathway is tRNA modification; tRNA-queuosine biosynthesis. Functionally, catalyzes the base-exchange of a guanine (G) residue with the queuine precursor 7-aminomethyl-7-deazaguanine (PreQ1) at position 34 (anticodon wobble position) in tRNAs with GU(N) anticodons (tRNA-Asp, -Asn, -His and -Tyr). Catalysis occurs through a double-displacement mechanism. The nucleophile active site attacks the C1' of nucleotide 34 to detach the guanine base from the RNA, forming a covalent enzyme-RNA intermediate. The proton acceptor active site deprotonates the incoming PreQ1, allowing a nucleophilic attack on the C1' of the ribose to form the product. After dissociation, two additional enzymatic reactions on the tRNA convert PreQ1 to queuine (Q), resulting in the hypermodified nucleoside queuosine (7-(((4,5-cis-dihydroxy-2-cyclopenten-1-yl)amino)methyl)-7-deazaguanosine). The chain is Queuine tRNA-ribosyltransferase from Paracidovorax citrulli (strain AAC00-1) (Acidovorax citrulli).